Reading from the N-terminus, the 306-residue chain is Pyridoxal 5'-phosphate synthase subunit PdxS (306 aa).

Asp36 lines the D-ribose 5-phosphate pocket. Catalysis depends on Lys93, which acts as the Schiff-base intermediate with D-ribose 5-phosphate. Gly165 is a D-ribose 5-phosphate binding site. Position 177 (Arg177) interacts with D-glyceraldehyde 3-phosphate. Residues Gly226 and 247–248 contribute to the D-ribose 5-phosphate site; that span reads GS.

It belongs to the PdxS/SNZ family. In terms of assembly, in the presence of PdxT, forms a dodecamer of heterodimers.

It catalyses the reaction aldehydo-D-ribose 5-phosphate + D-glyceraldehyde 3-phosphate + L-glutamine = pyridoxal 5'-phosphate + L-glutamate + phosphate + 3 H2O + H(+). It participates in cofactor biosynthesis; pyridoxal 5'-phosphate biosynthesis. Its function is as follows. Catalyzes the formation of pyridoxal 5'-phosphate from ribose 5-phosphate (RBP), glyceraldehyde 3-phosphate (G3P) and ammonia. The ammonia is provided by the PdxT subunit. Can also use ribulose 5-phosphate and dihydroxyacetone phosphate as substrates, resulting from enzyme-catalyzed isomerization of RBP and G3P, respectively. The polypeptide is Pyridoxal 5'-phosphate synthase subunit PdxS (Corynebacterium urealyticum (strain ATCC 43042 / DSM 7109)).